The sequence spans 209 residues: Thiamine-phosphate synthase (209 aa).

4-amino-2-methyl-5-(diphosphooxymethyl)pyrimidine-binding positions include 38-42 (QYRAK) and Asn-70. The Mg(2+) site is built by Asp-71 and Asp-90. A 4-amino-2-methyl-5-(diphosphooxymethyl)pyrimidine-binding site is contributed by Ser-109. 135–137 (TST) lines the 2-[(2R,5Z)-2-carboxy-4-methylthiazol-5(2H)-ylidene]ethyl phosphate pocket. A 4-amino-2-methyl-5-(diphosphooxymethyl)pyrimidine-binding site is contributed by Lys-138. 2-[(2R,5Z)-2-carboxy-4-methylthiazol-5(2H)-ylidene]ethyl phosphate-binding positions include Gly-165 and 185 to 186 (VS).

Belongs to the thiamine-phosphate synthase family. Requires Mg(2+) as cofactor.

The enzyme catalyses 2-[(2R,5Z)-2-carboxy-4-methylthiazol-5(2H)-ylidene]ethyl phosphate + 4-amino-2-methyl-5-(diphosphooxymethyl)pyrimidine + 2 H(+) = thiamine phosphate + CO2 + diphosphate. It catalyses the reaction 2-(2-carboxy-4-methylthiazol-5-yl)ethyl phosphate + 4-amino-2-methyl-5-(diphosphooxymethyl)pyrimidine + 2 H(+) = thiamine phosphate + CO2 + diphosphate. The catalysed reaction is 4-methyl-5-(2-phosphooxyethyl)-thiazole + 4-amino-2-methyl-5-(diphosphooxymethyl)pyrimidine + H(+) = thiamine phosphate + diphosphate. It functions in the pathway cofactor biosynthesis; thiamine diphosphate biosynthesis; thiamine phosphate from 4-amino-2-methyl-5-diphosphomethylpyrimidine and 4-methyl-5-(2-phosphoethyl)-thiazole: step 1/1. Its function is as follows. Condenses 4-methyl-5-(beta-hydroxyethyl)thiazole monophosphate (THZ-P) and 2-methyl-4-amino-5-hydroxymethyl pyrimidine pyrophosphate (HMP-PP) to form thiamine monophosphate (TMP). The chain is Thiamine-phosphate synthase from Persephonella marina (strain DSM 14350 / EX-H1).